Reading from the N-terminus, the 344-residue chain is uncharacterized protein (344 aa).

A coiled-coil region spans residues 221–249 (IQAQSMDEQKQIQEIYQNVEKLKEDVTKN).

It belongs to the IIV-6 287R family.

This is an uncharacterized protein from Aedes vexans (Inland floodwater mosquito).